Reading from the N-terminus, the 181-residue chain is MQCPYCQHTDSRVLESRSTGAGRSIRRRRECLSCKHRFTTYERIEFVPISVIKRNGQSEAFDRSKILRGMVRACEKTTVLPSTLEAIAEEIEAQLQQKPKRSITTAQIGDLVLHRLRQESEVAYVRFASVYRQFQGVDDFIETLSHLQDNAEQANLWIQTLNEDEESEDLTSPSVLTPSAN.

Residues 3–34 (CPYCQHTDSRVLESRSTGAGRSIRRRRECLSC) fold into a zinc finger. In terms of domain architecture, ATP-cone spans 49–139 (ISVIKRNGQS…VYRQFQGVDD (91 aa)).

Belongs to the NrdR family. Zn(2+) serves as cofactor.

In terms of biological role, negatively regulates transcription of bacterial ribonucleotide reductase nrd genes and operons by binding to NrdR-boxes. This chain is Transcriptional repressor NrdR, found in Picosynechococcus sp. (strain ATCC 27264 / PCC 7002 / PR-6) (Agmenellum quadruplicatum).